The sequence spans 123 residues: Large ribosomal subunit protein uL29 (123 aa).

The protein belongs to the universal ribosomal protein uL29 family.

In Theileria parva (East coast fever infection agent), this protein is Large ribosomal subunit protein uL29 (RPL35).